The following is a 357-amino-acid chain: Spore wall and anchoring disk complex protein EnP1 (357 aa).

The N-terminal stretch at 1-16 (MKLLGFLIVGLSAISA) is a signal peptide. N-linked (GlcNAc...) asparagine glycosylation is present at asparagine 47. An HBM1 motif is present at residues 150 to 158 (ERRPHYKKI). An HBM2 motif is present at residues 329–334 (LKKVRG).

The protein resides in the spore wall. The protein localises to the spore. Its subcellular location is the perispore. Spore wall protein involved in the adhesion to host cells surface glycoaminoglycans (GAGs). Microsporidian spore adherence is an integral part of activation and host cell invasion which requires the extrusion at the spore apex of a very long and coiled structure, the polar tube, through which the sporoplasm is pushed to enter into the potential host cell. The chain is Spore wall and anchoring disk complex protein EnP1 (EnP1) from Encephalitozoon cuniculi (strain GB-M1) (Microsporidian parasite).